We begin with the raw amino-acid sequence, 157 residues long: AP-1 complex subunit sigma-2 (157 aa).

Belongs to the adaptor complexes small subunit family. As to quaternary structure, adaptor protein complex 1 (AP-1) is a heterotetramer composed of two large adaptins (gamma-type subunit AP1G1 and beta-type subunit AP1B1), a medium adaptin (mu-type subunit AP1M1 or AP1M2) and a small adaptin (sigma-type subunit AP1S1 or AP1S2 or AP1S3). Binds to MUC1. Widely expressed.

Its subcellular location is the golgi apparatus. The protein localises to the cytoplasmic vesicle membrane. The protein resides in the membrane. It localises to the clathrin-coated pit. Its function is as follows. Subunit of clathrin-associated adaptor protein complex 1 that plays a role in protein sorting in the late-Golgi/trans-Golgi network (TGN) and/or endosomes. The AP complexes mediate both the recruitment of clathrin to membranes and the recognition of sorting signals within the cytosolic tails of transmembrane cargo molecules. The protein is AP-1 complex subunit sigma-2 (AP1S2) of Homo sapiens (Human).